Here is a 214-residue protein sequence, read N- to C-terminus: Large ribosomal subunit protein uL3 (214 aa).

The tract at residues 134 to 153 (ATHGNSLSHRAPGSIGQNQT) is disordered. Gln-152 is subject to N5-methylglutamine.

It belongs to the universal ribosomal protein uL3 family. In terms of assembly, part of the 50S ribosomal subunit. Forms a cluster with proteins L14 and L19. Methylated by PrmB.

Its function is as follows. One of the primary rRNA binding proteins, it binds directly near the 3'-end of the 23S rRNA, where it nucleates assembly of the 50S subunit. The protein is Large ribosomal subunit protein uL3 of Buchnera aphidicola subsp. Baizongia pistaciae (strain Bp).